The chain runs to 720 residues: Glycine--tRNA ligase beta subunit (720 aa).

It belongs to the class-II aminoacyl-tRNA synthetase family. As to quaternary structure, tetramer of two alpha and two beta subunits.

It is found in the cytoplasm. It carries out the reaction tRNA(Gly) + glycine + ATP = glycyl-tRNA(Gly) + AMP + diphosphate. In Dinoroseobacter shibae (strain DSM 16493 / NCIMB 14021 / DFL 12), this protein is Glycine--tRNA ligase beta subunit.